Here is a 1064-residue protein sequence, read N- to C-terminus: Valine--tRNA ligase, mitochondrial (1064 aa).

The transit peptide at methionine 1–histidine 26 directs the protein to the mitochondrion. The interval phenylalanine 25 to glutamate 65 is disordered. Positions arginine 42–alanine 56 are enriched in basic and acidic residues. The 'HIGH' region motif lies at proline 146 to histidine 156. A 'KMSKS' region motif is present at residues lysine 659–serine 663. Residue lysine 662 participates in ATP binding.

It belongs to the class-I aminoacyl-tRNA synthetase family.

The protein localises to the mitochondrion. It catalyses the reaction tRNA(Val) + L-valine + ATP = L-valyl-tRNA(Val) + AMP + diphosphate. Functionally, catalyzes the attachment of valine to tRNA(Val) in a two-step reaction: valine is first activated by ATP to form Val-AMP and then transferred to the acceptor end of tRNA(Val). In Macaca mulatta (Rhesus macaque), this protein is Valine--tRNA ligase, mitochondrial (VARS2).